A 413-amino-acid polypeptide reads, in one-letter code: Cardiolipin synthase B (413 aa).

PLD phosphodiesterase domains follow at residues 108–135 (VFRRMHRKIVVIDARIAFIGGLNYSSEH) and 285–312 (RRRPLHGKVALMDDHWATVGSSNLDPLS). Active-site residues include H113, K115, D120, H290, K292, and D297. A disordered region spans residues 388-413 (TQVDPPAQPTMETQDRVETENTGVNP).

It belongs to the phospholipase D family. Cardiolipin synthase subfamily. ClsB sub-subfamily.

The protein localises to the cell membrane. It carries out the reaction 2 a 1,2-diacyl-sn-glycero-3-phospho-(1'-sn-glycerol) = a cardiolipin + glycerol. In terms of biological role, catalyzes the phosphatidyl group transfer from one phosphatidylglycerol molecule to another to form cardiolipin (CL) (diphosphatidylglycerol) and glycerol. This Shigella flexneri protein is Cardiolipin synthase B.